A 154-amino-acid polypeptide reads, in one-letter code: Interleukin-2 (154 aa).

The N-terminal stretch at Met1–Ser20 is a signal peptide. Residue Thr23 is glycosylated (O-linked (GalNAc...) threonine). Cys78 and Cys126 form a disulfide bridge.

It belongs to the IL-2 family.

Its subcellular location is the secreted. Its function is as follows. Cytokine produced by activated CD4-positive helper T-cells and to a lesser extend activated CD8-positive T-cells and natural killer (NK) cells that plays pivotal roles in the immune response and tolerance. Binds to a receptor complex composed of either the high-affinity trimeric IL-2R (IL2RA/CD25, IL2RB/CD122 and IL2RG/CD132) or the low-affinity dimeric IL-2R (IL2RB and IL2RG). Interaction with the receptor leads to oligomerization and conformation changes in the IL-2R subunits resulting in downstream signaling starting with phosphorylation of JAK1 and JAK3. In turn, JAK1 and JAK3 phosphorylate the receptor to form a docking site leading to the phosphorylation of several substrates including STAT5. This process leads to activation of several pathways including STAT, phosphoinositide-3-kinase/PI3K and mitogen-activated protein kinase/MAPK pathways. Functions as a T-cell growth factor and can increase NK-cell cytolytic activity as well. Promotes strong proliferation of activated B-cells and subsequently immunoglobulin production. Plays a pivotal role in regulating the adaptive immune system by controlling the survival and proliferation of regulatory T-cells, which are required for the maintenance of immune tolerance. Moreover, participates in the differentiation and homeostasis of effector T-cell subsets, including Th1, Th2, Th17 as well as memory CD8-positive T-cells. This chain is Interleukin-2 (IL2), found in Papio anubis (Olive baboon).